Reading from the N-terminus, the 370-residue chain is Chorismate synthase (370 aa).

Arg47 contributes to the NADP(+) binding site. Residues 124–126, Gly286, 301–305, and Arg327 contribute to the FMN site; these read RSS and KPTAT.

Belongs to the chorismate synthase family. In terms of assembly, homotetramer. The cofactor is FMNH2.

It catalyses the reaction 5-O-(1-carboxyvinyl)-3-phosphoshikimate = chorismate + phosphate. It functions in the pathway metabolic intermediate biosynthesis; chorismate biosynthesis; chorismate from D-erythrose 4-phosphate and phosphoenolpyruvate: step 7/7. Catalyzes the anti-1,4-elimination of the C-3 phosphate and the C-6 proR hydrogen from 5-enolpyruvylshikimate-3-phosphate (EPSP) to yield chorismate, which is the branch point compound that serves as the starting substrate for the three terminal pathways of aromatic amino acid biosynthesis. This reaction introduces a second double bond into the aromatic ring system. In Trichodesmium erythraeum (strain IMS101), this protein is Chorismate synthase.